The primary structure comprises 372 residues: N-methyl-L-tryptophan oxidase (372 aa).

An FAD-binding site is contributed by 4 to 34 (DLIIIGSGSVGAAAGYYATRAGLNVLMTDAH). C308 bears the S-8alpha-FAD cysteine mark.

Belongs to the MSOX/MTOX family. MTOX subfamily. As to quaternary structure, monomer. FAD serves as cofactor.

The enzyme catalyses N(alpha)-methyl-L-tryptophan + O2 + H2O = L-tryptophan + formaldehyde + H2O2. Functionally, catalyzes the oxidative demethylation of N-methyl-L-tryptophan. This chain is N-methyl-L-tryptophan oxidase, found in Escherichia coli O1:K1 / APEC.